A 252-amino-acid chain; its full sequence is Glycerol-3-phosphate acyltransferase (252 aa).

6 helical membrane passes run 6 to 26 (SVAM…YLIG), 66 to 86 (ILTL…TYII), 104 to 124 (AILV…PIFF), 140 to 160 (ITID…ILLI), 164 to 184 (MSLS…IPGI), and 204 to 224 (VIKG…ILIY).

It belongs to the PlsY family. In terms of assembly, probably interacts with PlsX.

The protein localises to the cell membrane. It catalyses the reaction an acyl phosphate + sn-glycerol 3-phosphate = a 1-acyl-sn-glycero-3-phosphate + phosphate. It participates in lipid metabolism; phospholipid metabolism. Functionally, catalyzes the transfer of an acyl group from acyl-phosphate (acyl-PO(4)) to glycerol-3-phosphate (G3P) to form lysophosphatidic acid (LPA). This enzyme utilizes acyl-phosphate as fatty acyl donor, but not acyl-CoA or acyl-ACP. The chain is Glycerol-3-phosphate acyltransferase from Ureaplasma urealyticum serovar 10 (strain ATCC 33699 / Western).